Consider the following 510-residue polypeptide: Inositol-3-phosphate synthase (510 aa).

Positions 70, 71, 72, 73, 143, 180, 190, 193, 230, 231, 232, 233, 281, 282, 306, 309, 340, 341, 342, 355, 393, 394, 422, and 423 each coordinate NAD(+).

It belongs to the myo-inositol 1-phosphate synthase family. NAD(+) is required as a cofactor.

It is found in the cytoplasm. Its subcellular location is the cytosol. The protein localises to the nucleus. It carries out the reaction D-glucose 6-phosphate = 1D-myo-inositol 3-phosphate. It participates in polyol metabolism; myo-inositol biosynthesis; myo-inositol from D-glucose 6-phosphate: step 1/2. Key enzyme in myo-inositol biosynthesis pathway that catalyzes the conversion of glucose 6-phosphate to 1-myo-inositol 1-phosphate in a NAD-dependent manner. In Spirodela polyrhiza (Giant duckweed), this protein is Inositol-3-phosphate synthase (TUR1).